Here is a 742-residue protein sequence, read N- to C-terminus: Ectonucleotide pyrophosphatase/phosphodiesterase 1 (742 aa).

Residues 1-113 (MELQNDLESL…TGFHSKVPFK (113 aa)) lie on the Cytoplasmic side of the membrane. Residues 114-134 (IIFRTLFGSLVFAIFLILMIN) form a helical membrane-spanning segment. At 135–742 (IAKPHHSTRV…SIDDLVDSDT (608 aa)) the chain is on the extracellular side. Asparagine 161 and asparagine 204 each carry an N-linked (GlcNAc...) asparagine glycan. Positions 168–545 (PLTIVISLDG…VFTIGSHGYD (378 aa)) are phosphodiesterase. Catalysis depends on threonine 219, which acts as the Nucleophile. N-linked (GlcNAc...) asparagine glycans are attached at residues asparagine 264, asparagine 296, and asparagine 403. Over residues 640-659 (EETEQDNVDNDNDDNDDGNT) the composition is skewed to acidic residues. Disordered stretches follow at residues 640–670 (EETE…SSSL) and 686–711 (TLLG…TAST). Positions 691–711 (TSPSSRSSSSSSIQASATAST) are enriched in low complexity.

This sequence belongs to the nucleotide pyrophosphatase/phosphodiesterase family. Post-translationally, autophosphorylated as part of the catalytic cycle of phosphodiesterase/pyrophosphatase activity. N-glycosylated.

The protein resides in the membrane. The enzyme catalyses Hydrolytically removes 5'-nucleotides successively from the 3'-hydroxy termini of 3'-hydroxy-terminated oligonucleotides.. The catalysed reaction is a ribonucleoside 5'-triphosphate + H2O = a ribonucleoside 5'-phosphate + diphosphate + H(+). It carries out the reaction a 2'-deoxyribonucleoside 5'-triphosphate + H2O = a 2'-deoxyribonucleoside 5'-phosphate + diphosphate + H(+). In terms of biological role, mediates extracellular nucleotide derived phosphate hydrolysis along with NPP2 and PHO5. The sequence is that of Ectonucleotide pyrophosphatase/phosphodiesterase 1 (NPP1) from Saccharomyces cerevisiae (strain ATCC 204508 / S288c) (Baker's yeast).